Consider the following 239-residue polypeptide: Endonuclease V (239 aa).

Mg(2+)-binding residues include aspartate 48 and aspartate 116.

The protein belongs to the endonuclease V family. It depends on Mg(2+) as a cofactor.

The protein resides in the cytoplasm. The enzyme catalyses Endonucleolytic cleavage at apurinic or apyrimidinic sites to products with a 5'-phosphate.. Its function is as follows. DNA repair enzyme involved in the repair of deaminated bases. Selectively cleaves double-stranded DNA at the second phosphodiester bond 3' to a deoxyinosine leaving behind the intact lesion on the nicked DNA. The polypeptide is Endonuclease V (Xanthomonas oryzae pv. oryzae (strain MAFF 311018)).